The sequence spans 425 residues: Glutamate-1-semialdehyde 2,1-aminomutase (425 aa).

Lys-265 is modified (N6-(pyridoxal phosphate)lysine).

This sequence belongs to the class-III pyridoxal-phosphate-dependent aminotransferase family. HemL subfamily. As to quaternary structure, homodimer. Requires pyridoxal 5'-phosphate as cofactor.

It localises to the cytoplasm. The catalysed reaction is (S)-4-amino-5-oxopentanoate = 5-aminolevulinate. Its pathway is porphyrin-containing compound metabolism; protoporphyrin-IX biosynthesis; 5-aminolevulinate from L-glutamyl-tRNA(Glu): step 2/2. This Opitutus terrae (strain DSM 11246 / JCM 15787 / PB90-1) protein is Glutamate-1-semialdehyde 2,1-aminomutase.